The chain runs to 464 residues: 2-oxoadipate dioxygenase/decarboxylase (464 aa).

Residues His70, Arg74, and His226 each contribute to the 2-oxoadipate site. His70 contacts Fe(2+). The Fe(2+) site is built by His226 and Glu294. Val402 is a 2-oxoadipate binding site.

Belongs to the 2-oxoadipate dioxygenase/decarboxylase family. It depends on Fe(2+) as a cofactor.

It catalyses the reaction 2-oxoadipate + O2 = (R)-2-hydroxyglutarate + CO2. It participates in amino-acid degradation. Inhibited by EDTA. Catalyzes the decarboxylation and hydroxylation of 2-oxoadipate (2OA) to form D-2-hydroxyglutarate (D-2-HGA). Is specific for 2-oxoadipate. Is involved in a D-lysine catabolic pathway. The protein is 2-oxoadipate dioxygenase/decarboxylase of Pseudomonas putida (strain ATCC 47054 / DSM 6125 / CFBP 8728 / NCIMB 11950 / KT2440).